Consider the following 106-residue polypeptide: uncharacterized protein (106 aa).

The protein localises to the mitochondrion. This is an uncharacterized protein from Claviceps purpurea (Ergot fungus).